The sequence spans 308 residues: MTKTLVFGHKNPDTDTICSAISYAELKKAQGADIEAVRLGELNSETAFVLDYFQVTAPRLVQTVANEVSEVALVDHNERQQSVDDIDDVTVTAVVDHHRIANFETSDPLYYRAEPVGCTTTILLKMFRENEVEVSKTVAGLMLSAIISDTLLFQSPTCTEEDKVAAQKLAQIADVEIQSYGMEMLKAGADVSKKTVAELLLDAKEFNMNDNKVEIAQINVVDVNDVLSRRAEVEALMTQNIVDKGLDLYLFVITNILTNDSVGIAIGSKTAVVEEAYGVKFVENQAPLKGVVSRKKQVVPILTDTFAK.

Mn(2+) is bound by residues His9, Asp13, Asp15, Asp75, His97, and Asp149.

It belongs to the PPase class C family. Mn(2+) is required as a cofactor.

It is found in the cytoplasm. The catalysed reaction is diphosphate + H2O = 2 phosphate + H(+). This Listeria monocytogenes serotype 4a (strain HCC23) protein is Probable manganese-dependent inorganic pyrophosphatase.